Reading from the N-terminus, the 479-residue chain is Gamma-aminobutyric acid receptor subunit rho-1 (479 aa).

The N-terminal stretch at 1-21 is a signal peptide; that stretch reads MLAVPNMRFGIFLLWWGWVLA. Residues 22 to 280 lie on the Extracellular side of the membrane; sequence TESRMHWPGR…LYINFTLRRH (259 aa). The interval 32–55 is disordered; sequence EVHEMSKKGRPQRQRREVHEDAHK. Over residues 45–55 the composition is skewed to basic and acidic residues; it reads QRREVHEDAHK. R125 lines the 4-aminobutanoate pocket. N140 carries an N-linked (GlcNAc...) asparagine glycan. S189 is a 4-aminobutanoate binding site. A disulfide bridge links C198 with C212. E217 provides a ligand contact to 4-aminobutanoate. N-linked (GlcNAc...) asparagine glycans are attached at residues N234 and N274. Residues 281–301 form a helical membrane-spanning segment; sequence IFFFLLQTYFPATLMVMLSWV. Topologically, residues 302-313 are cytoplasmic; sequence SFWIDRRAVPAR. The chain crosses the membrane as a helical span at residues 314 to 334; sequence VPLGITTVLTMSTIITGVNAS. Residues 335–345 are Extracellular-facing; the sequence is MPRVSYIKAVD. Residues 346–366 form a helical membrane-spanning segment; that stretch reads IYLWVSFVFVFLSVLEYAAVN. The Cytoplasmic portion of the chain corresponds to 367-457; the sequence is YLTTVQERKE…MRIDTHAIDK (91 aa). A helical membrane pass occupies residues 458-478; it reads YSRIIFPAAYILFNLIYWSIF. A topological domain (extracellular) is located at residue S479.

It belongs to the ligand-gated ion channel (TC 1.A.9) family. Gamma-aminobutyric acid receptor (TC 1.A.9.5) subfamily. GABRR1 sub-subfamily. Three rho subunits (rho-1/GBRR1, rho-2/GBRR2 and rho-3/GBRR3) coassemble either to form functional homopentamers or heteropentamers. Rho-1/GBRR1 subunits can also associate with alpha-1/GBRA1 subunits to form a functional GABAAR. Interacts with SQSTM1. In terms of tissue distribution, highly expressed in the retina. Expressed in a lesser extent in brain, lung and thymus.

The protein resides in the postsynaptic cell membrane. It is found in the cell membrane. It carries out the reaction chloride(in) = chloride(out). Inhibited by TPMPA, a rho-specific antagonist, when forming a homopentamer. In contrast with other GABAARs, rho-1 GABAAR is not inhibited by bicuculline, when forming a homopentamer. In terms of biological role, rho subunit of the pentameric ligand-gated chloride channels responsible for mediating the effects of gamma-aminobutyric acid (GABA), the major inhibitory neurotransmitter in the brain. Rho-containing GABA-gated chloride channels are a subclass of GABA(A) receptors (GABAARs) entirely composed of rho subunits, where GABA molecules bind at the rho intersubunit interfaces. When activated by GABA, rho-GABAARs selectively allow the flow of chloride anions across the cell membrane down their electrochemical gradient. Rho-1 subunits are primarily expressed in retina where rho-1-containing GABAARs may play a role in retinal neurotransmission. Rho-1 GABAARs are also involved in neuronal tonic (extrasynaptic) and phasic (synaptic) transmission in the Purkinje neurons of the cerebellum. Rho-1 GABAARs may also contribute to the regulation of glial development in the cerebellum by controlling extrasynaptic transmission. The chain is Gamma-aminobutyric acid receptor subunit rho-1 from Homo sapiens (Human).